We begin with the raw amino-acid sequence, 358 residues long: Protein-L-isoaspartate O-methyltransferase domain-containing protein 1 (358 aa).

Gly2 is lipidated: N-myristoyl glycine. Ser64 is a catalytic residue. AdoMet binding motif stretches follow at residues 85-94 (LNLGSGTGYL), 160-164 (YDRIY), and 181-191 (LKVGGILVMPI). Residues 240–250 (VRNLQDLARIY) are BC-box. Positions 300-339 (PLDSEEDERMEDDNKEEEDKDHSEALKPEEPPRNLLREKI) are disordered. Positions 302–318 (DSEEDERMEDDNKEEED) are enriched in acidic residues. Residues 319–339 (KDHSEALKPEEPPRNLLREKI) are compositionally biased toward basic and acidic residues. Residues 342–345 (LPLP) form a CUL-box region.

Belongs to the methyltransferase superfamily. L-isoaspartyl/D-aspartyl protein methyltransferase family. In terms of assembly, component of the probable ECS(PCMTD1) E3 ubiquitin-protein ligase complex, at least composed of CUL5, ELOB, ELOC, RBX2 and PCMTD1.

It localises to the cytoplasm. The protein localises to the membrane. Substrate recognition component of an ECS (Elongin BC-CUL5-SOCS-box protein) E3 ubiquitin ligase complex which mediates the ubiquitination and subsequent proteasomal degradation of target proteins. Specifically binds to the methyltransferase cofactor S-adenosylmethionine (AdoMet) via the N-terminal AdoMet binding motif, but does not display methyltransferase activity. May provide an alternate maintenance pathway for modified proteins by acting as a damage-specific E3 ubiquitin ligase adaptor protein. This Gallus gallus (Chicken) protein is Protein-L-isoaspartate O-methyltransferase domain-containing protein 1 (PCMTD1).